The chain runs to 137 residues: Structural protein A137R (137 aa).

It belongs to the asfivirus A137R family. In terms of assembly, interacts with host TBK1.

Its subcellular location is the virion. It is found in the host cytoplasm. In terms of biological role, plays a role in the inhibition of the host innate immune response. Mechanistically, promotes the autophagy-mediated lysosomal degradation of host TBK1 and affects IRF3 nuclear translocation to block type I IFN production. The sequence is that of Structural protein A137R from African swine fever virus (isolate Warthog/Namibia/Wart80/1980) (ASFV).